We begin with the raw amino-acid sequence, 1503 residues long: Transient receptor potential cation channel subfamily M member 2 (1503 aa).

Residues 1–20 (MEPSALRKAGSEQEEGFEGL) form a disordered region. At 1–752 (MEPSALRKAG…WWGQLSVDNG (752 aa)) the chain is on the cytoplasmic side. ADP-D-ribose-binding residues include Thr-174, Asn-179, Arg-302, Gly-333, and Thr-336. Thr-740 carries the post-translational modification Phosphothreonine. An intramembrane segment occupies 753-769 (LWRVTLCMLAFPLLLTG). Residues 770–795 (LISFREKRLQDVGTPAARARAFFTAP) lie on the Cytoplasmic side of the membrane. The helical transmembrane segment at 796-816 (VVVFHLNILSYFAFLCLFAYV) threads the bilayer. The Extracellular segment spans residues 817–827 (LMVDFQPVPSW). Residues 828–848 (CECAIYLWLFSLVCEEMRQLF) form a helical membrane-spanning segment. Ca(2+) contacts are provided by Glu-843 and Gln-846. Residues 849–867 (YDPDECGLMKKAALYFSDF) lie on the Cytoplasmic side of the membrane. A helical transmembrane segment spans residues 868-888 (WNKLDVGAILLFVAGLTCRLI). Residue Asn-869 coordinates Ca(2+). Over 889–896 (PATLYPGR) the chain is Extracellular. The chain crosses the membrane as a helical span at residues 897–917 (VILSLDFILFCLRLMHIFTIS). The Cytoplasmic portion of the chain corresponds to 918-929 (KTLGPKIIIVKR). The chain crosses the membrane as a helical span at residues 930-950 (MMKDVFFFLFLLAVWVVSFGV). Residues 951–970 (AKQAILIHNERRVDWLFRGA) are Extracellular-facing. The pore-forming intramembrane region spans 971–985 (VYHSYLTIFGQIPGY). The short motif at 979 to 982 (FGQI) is the Selectivity filter element. Residues 986-1022 (IDGVNFNPEHCSPNGTDPYKPKCPESDATQQRPAFPE) are Extracellular-facing. Cys-996 and Cys-1008 form a disulfide bridge. Residues 1023-1044 (WLTVLLLCLYLLFTNILLLNLL) form a helical membrane-spanning segment. The Cytoplasmic segment spans residues 1045–1079 (IAMFNYTFQQVQEHTDQIWKFQRHDLIEEYHGRPA). Glu-1073 contributes to the Ca(2+) binding site. Residues 1080 to 1098 (APPPFILLSHLQLFIKRVV) lie within the membrane without spanning it. Over 1099–1503 (LKTPAKRHKQ…KAAAEFGAHY (405 aa)) the chain is Cytoplasmic. Positions 1206–1237 (EADVPTLASQKAAEEPDAEPGGRKKTEEPGDS) are disordered. A Nudix hydrolase domain is found at 1354–1498 (RWRRNEDGAI…KTLLQKAAAE (145 aa)). ADP-D-ribose contacts are provided by Leu-1381 and Ser-1382. A Nudix box motif is present at residues 1390-1411 (GSREPGEMLPRKLKRILRQEHW). Positions 1431, 1433, 1485, and 1487 each coordinate ADP-D-ribose.

This sequence belongs to the transient receptor (TC 1.A.4) family. LTrpC subfamily. TRPM2 sub-subfamily. As to quaternary structure, homotetramer. Isoform 1 can interact with isoform 3. This interaction decreases Ca(2+) influx through isoform 1 and suppresses susceptibility to oxidative stress-induced cell death. Phosphorylation of TRPM2 at Thr-740 by protein kinase C (PKC) counteracts the effect of cytosolic Ca(2+) and elevates the temperature threshold. In terms of tissue distribution, highly expressed in brain and peripheral blood cells, such as neutrophils. Also detected in bone marrow, spleen, heart, liver and lung. Isoform 2 is found in neutrophil granulocytes.

The protein resides in the cell membrane. It localises to the perikaryon. The protein localises to the cell projection. It is found in the cytoplasmic vesicle. Its subcellular location is the lysosome. The catalysed reaction is Ca(2+)(in) = Ca(2+)(out). The enzyme catalyses Na(+)(in) = Na(+)(out). Activated by intracellular ADP-ribose, beta-NAD (NAD(+)) and similar compounds, and by oxidative stress caused by reactive oxygen or nitrogen species. Ca(2+) and PI(4,5)P2 are required for channel opening by ADP-ribose. Activation by ADP-ribose and beta-NAD is strongly increased by moderate heat (35 to 40 degrees Celsius). Likewise, reactive oxygen species lower the threshold for activation by moderate heat (37 degrees Celsius). Activated by moderate heat (35 to 40 degrees Celsius). Inactivated by exposure to extracellular pH between 4.0 and 6.5; irreversibly inactivated when open channels are exposed to extracellular pH between 4.0 and 6.5, while pre-exposure of closed channels to extracellular pH 5.5 gives rise to currents that rapidly inactivate, but protects against irreversible inactivation. Inactivated by intracellular ATP. Activated by arachidonic acid. Inhibited by 2-aminoethyl diphenylborinate (2-APB). Nonselective, voltage-independent cation channel that mediates Na(+) and Ca(2+) influx, leading to increased cytoplasmic Ca(2+) levels. Functions as a ligand-gated ion channel, gated by intracellular adenosine diphosphate ribose (ADP-ribose), Ca(2+), warm temperature, and oxidative stress. The precise physiological activators are under debate; the true, physiological activators may be ADP-ribose and ADP-ribose-2'-phosphate. Binding of ADP-ribose to the cytoplasmic Nudix domain causes a conformation change; the channel is primed but still requires Ca(2+) binding to trigger channel opening. Extracellular Ca(2+) passes through the channel and increases channel activity. Contributes to Ca(2+) release from intracellular stores in response to ADP-ribose. Plays a role in numerous processes that involve signaling via intracellular Ca(2+) levels. Besides, mediates the release of lysosomal Zn(2+) stores in response to reactive oxygen species, leading to increased cytosolic Zn(2+) levels. Plays a role in mediating behavorial and physiological responses to moderate heat and thereby contributes to body temperature homeostasis. Plays a role in insulin secretion, a process that requires increased cytoplasmic Ca(2+) levels. Required for normal IFNG and cytokine secretion and normal innate immune immunity in response to bacterial infection. Required for normal phagocytosis and cytokine release by macrophages exposed to zymosan (in vitro). Plays a role in dendritic cell differentiation and maturation, and in dendritic cell chemotaxis via its role in regulating cytoplasmic Ca(2+) levels. Plays a role in the regulation of the reorganization of the actin cytoskeleton and filopodia formation in response to reactive oxygen species via its role in increasing cytoplasmic Ca(2+) and Zn(2+) levels. Confers susceptibility to cell death following oxidative stress. Functionally, lacks cation channel activity. Does not mediate cation transport in response to oxidative stress or ADP-ribose. In terms of biological role, lacks cation channel activity and negatively regulates the channel activity of isoform 1. Negatively regulates susceptibility to cell death in reposponse to oxidative stress. The polypeptide is Transient receptor potential cation channel subfamily M member 2 (TRPM2) (Homo sapiens (Human)).